We begin with the raw amino-acid sequence, 304 residues long: Elongation factor Ts (304 aa).

The involved in Mg(2+) ion dislocation from EF-Tu stretch occupies residues 80–83 (TDFV).

Belongs to the EF-Ts family.

The protein resides in the cytoplasm. In terms of biological role, associates with the EF-Tu.GDP complex and induces the exchange of GDP to GTP. It remains bound to the aminoacyl-tRNA.EF-Tu.GTP complex up to the GTP hydrolysis stage on the ribosome. The polypeptide is Elongation factor Ts (Clostridium tetani (strain Massachusetts / E88)).